The following is a 215-amino-acid chain: Cytochrome b6 (215 aa).

A helical transmembrane segment spans residues 32 to 52 (IFYCLGGITLTCFLVQVATGF). C35 contributes to the heme c binding site. H86 and H100 together coordinate heme b. 3 helical membrane-spanning segments follow: residues 90-110 (ASMM…TGGF), 116-136 (LTWV…VTGY), and 186-206 (LHTF…FPMI). H187 and H202 together coordinate heme b.

This sequence belongs to the cytochrome b family. PetB subfamily. In terms of assembly, the 4 large subunits of the cytochrome b6-f complex are cytochrome b6, subunit IV (17 kDa polypeptide, PetD), cytochrome f and the Rieske protein, while the 4 small subunits are PetG, PetL, PetM and PetN. The complex functions as a dimer. The cofactor is heme b. Requires heme c as cofactor.

It is found in the plastid. The protein resides in the chloroplast thylakoid membrane. In terms of biological role, component of the cytochrome b6-f complex, which mediates electron transfer between photosystem II (PSII) and photosystem I (PSI), cyclic electron flow around PSI, and state transitions. This is Cytochrome b6 from Daucus carota (Wild carrot).